A 463-amino-acid polypeptide reads, in one-letter code: Asparagine--tRNA ligase (463 aa).

This sequence belongs to the class-II aminoacyl-tRNA synthetase family. In terms of assembly, homodimer.

It is found in the cytoplasm. It catalyses the reaction tRNA(Asn) + L-asparagine + ATP = L-asparaginyl-tRNA(Asn) + AMP + diphosphate + H(+). The chain is Asparagine--tRNA ligase from Alkaliphilus oremlandii (strain OhILAs) (Clostridium oremlandii (strain OhILAs)).